We begin with the raw amino-acid sequence, 1032 residues long: Chitin synthase 8 (1032 aa).

Pro residues-rich tracts occupy residues 1–11 (MRPGDIYPPPQ) and 26–41 (PPQP…PPQQ). The tract at residues 1–220 (MRPGDIYPPP…DDDMNDSHPL (220 aa)) is disordered. 3 stretches are compositionally biased toward polar residues: residues 65 to 78 (MSPT…SRYN), 98 to 107 (LPTQSLSPFN), and 143 to 160 (TNPS…SYSY). A glycan (N-linked (GlcNAc...) asparagine) is linked at asparagine 78. A compositionally biased stretch (low complexity) spans 176–188 (PHHSSQSSVSSIP). Residues asparagine 215, asparagine 304, asparagine 473, asparagine 545, and asparagine 691 are each glycosylated (N-linked (GlcNAc...) asparagine). Helical transmembrane passes span 728–748 (TLNM…FFVL), 762–782 (VNIP…LLSL), 796–816 (SMVG…FLAV), 842–862 (IVIS…MALE), 870–890 (FFQY…YAFC), 972–992 (VLLV…QASG), and 995–1015 (NSLA…LAFF).

Belongs to the chitin synthase family.

The protein localises to the cell membrane. It catalyses the reaction [(1-&gt;4)-N-acetyl-beta-D-glucosaminyl](n) + UDP-N-acetyl-alpha-D-glucosamine = [(1-&gt;4)-N-acetyl-beta-D-glucosaminyl](n+1) + UDP + H(+). In terms of biological role, polymerizes chitin, a structural polymer of the cell wall and septum, by transferring the sugar moiety of UDP-GlcNAc to the non-reducing end of the growing chitin polymer. This is Chitin synthase 8 from Cryptococcus neoformans var. grubii serotype A (strain H99 / ATCC 208821 / CBS 10515 / FGSC 9487) (Filobasidiella neoformans var. grubii).